Reading from the N-terminus, the 576-residue chain is Glutamine-dependent NAD(+) synthetase (576 aa).

The CN hydrolase domain maps to 4-246 (LRVTLAQLNP…EEIITVDLDL (243 aa)). Residue Glu44 is the Proton acceptor; for glutaminase activity of the active site. The For glutaminase activity role is filled by Lys112. Tyr118 serves as a coordination point for L-glutamine. Residue Cys148 is the Nucleophile; for glutaminase activity of the active site. L-glutamine is bound by residues Ser176 and Lys182. The interval 292–576 (PVREEEMFRA…PITNRFKEPL (285 aa)) is ligase. ATP is bound at residue 321-328 (GLSGGMDS). Asn404 provides a ligand contact to deamido-NAD(+). Thr428 contributes to the ATP binding site. Residues Glu433 and Lys545 each contribute to the deamido-NAD(+) site.

The protein in the C-terminal section; belongs to the NAD synthetase family.

The enzyme catalyses deamido-NAD(+) + L-glutamine + ATP + H2O = L-glutamate + AMP + diphosphate + NAD(+) + H(+). It participates in cofactor biosynthesis; NAD(+) biosynthesis; NAD(+) from deamido-NAD(+) (L-Gln route): step 1/1. Functionally, catalyzes the ATP-dependent amidation of deamido-NAD to form NAD. Uses L-glutamine as a nitrogen source. The polypeptide is Glutamine-dependent NAD(+) synthetase (nadE2) (Thermotoga maritima (strain ATCC 43589 / DSM 3109 / JCM 10099 / NBRC 100826 / MSB8)).